Consider the following 341-residue polypeptide: Barley B recombinant-like protein A (341 aa).

The span at 48–62 (HQHQQHVPHHHHQPH) shows a compositional bias: basic residues. 2 disordered regions span residues 48 to 95 (HQHQ…MNFA) and 150 to 234 (MQQQ…RKNI). Over residues 68 to 77 (GANGNANGGA) the composition is skewed to low complexity. Pro residues predominate over residues 78–90 (MPPPPATEAPPSM). The span at 190-211 (PKKRQQGRQPKVPRAKKPKKSA) shows a compositional bias: basic residues.

Belongs to the BBR/BPC family.

It is found in the nucleus. In terms of biological role, transcriptional regulator that specifically binds to GA-rich elements (GAGA-repeats) present in regulatory sequences of genes involved in developmental processes. In Oryza sativa subsp. japonica (Rice), this protein is Barley B recombinant-like protein A.